The chain runs to 209 residues: Ribosomal RNA large subunit methyltransferase E (209 aa).

S-adenosyl-L-methionine is bound by residues G63, W65, D83, D99, and D124. K164 serves as the catalytic Proton acceptor.

The protein belongs to the class I-like SAM-binding methyltransferase superfamily. RNA methyltransferase RlmE family.

It is found in the cytoplasm. The enzyme catalyses uridine(2552) in 23S rRNA + S-adenosyl-L-methionine = 2'-O-methyluridine(2552) in 23S rRNA + S-adenosyl-L-homocysteine + H(+). In terms of biological role, specifically methylates the uridine in position 2552 of 23S rRNA at the 2'-O position of the ribose in the fully assembled 50S ribosomal subunit. This Yersinia pseudotuberculosis serotype O:1b (strain IP 31758) protein is Ribosomal RNA large subunit methyltransferase E.